Reading from the N-terminus, the 1429-residue chain is Gag-Pol polyprotein (1429 aa).

Gly2 is lipidated: N-myristoyl glycine; by host. The segment at 7–31 is interaction with Gp41; that stretch reads VLSGGKLDKWEKIQLRPGGKKKYRL. An interaction with host CALM1 region spans residues 8–43; it reads LSGGKLDKWEKIQLRPGGKKKYRLKHLVWASRELER. Positions 12–19 are interaction with host AP3D1; the sequence is KLDKWEKI. The interaction with membrane phosphatidylinositol 4,5-bisphosphate and RNA stretch occupies residues 14–33; that stretch reads DKWEKIQLRPGGKKKYRLKH. A Nuclear export signal motif is present at residues 16–22; that stretch reads WEKIQLR. Residues 26–32 carry the Nuclear localization signal motif; the sequence is KKKYRLK. The interaction with membrane phosphatidylinositol 4,5-bisphosphate stretch occupies residues 73 to 77; it reads EELRS. The segment at 105 to 124 is disordered; sequence EEEQNRTQQKTQQGKADKGV. Polar residues predominate over residues 110-124; it reads RTQQKTQQGKADKGV. Tyr128 is modified (phosphotyrosine; by host). Residues 185–223 form an interaction with human PPIA/CYPA and NUP153 region; it reads NTVGGHQAAMQMLKDTINEEAAEWDRMHPVQAGPIPPGQ. Positions 273–359 are dimerization/Multimerization of capsid protein p24; it reads YSPVSILDIR…GGPGHKARVL (87 aa). 2 consecutive CCHC-type zinc fingers follow at residues 385 to 402 and 406 to 423; these read IKCFNCGKEGHLARNCRA and KGCWKCGKEGHQMKDCSE. Residues 439–479 form a disordered region; sequence EARKFSSEQTRANSPTSRELWVRGEDNPLSETGNERSGTGS. Composition is skewed to polar residues over residues 445-455 and 467-479; these read SEQTRANSPTS and LSETGNERSGTGS. The tract at residues 484–488 is dimerization of protease; sequence PQITL. A Peptidase A2 domain is found at 503 to 572; that stretch reads REALLDTGAD…TPVNIIGRNM (70 aa). Residue Asp508 is the For protease activity; shared with dimeric partner of the active site. Dimerization of protease regions lie at residues 532–538 and 571–583; these read GIGGFIK and NMLTQIGCTLNFP. Residues 626–816 enclose the Reverse transcriptase domain; the sequence is EGKISKIGPE…PPFLWMGYEL (191 aa). Mg(2+)-binding residues include Asp692, Asp767, and Asp768. The segment at 809-817 is RT 'primer grip'; it reads FLWMGYELH. Positions 980–996 match the Tryptophan repeat motif motif; that stretch reads WGTWWTEYWQATWIPEW. One can recognise an RNase H type-1 domain in the interval 1016 to 1139; sequence IVGAETFYVD…VDKLVSSGIR (124 aa). Residues Asp1025, Glu1060, Asp1080, and Asp1131 each contribute to the Mg(2+) site. The Integrase-type zinc-finger motif lies at 1145-1186; the sequence is DGIDKAQEEHEKYHNNWRAMASDFNLPPVVAKEIVASCDKCQ. Residues His1154, His1158, Cys1182, and Cys1185 each contribute to the Zn(2+) site. An Integrase catalytic domain is found at 1196–1346; it reads VDCSPGIWQL…SAGERIIDII (151 aa). Positions 1206, 1258, and 1294 each coordinate Mg(2+). A DNA-binding region (integrase-type) is located at residues 1365 to 1411; sequence FRVYYRDSREPIWKGPAKLLWKGEGAVVIQNSEIKVVPRRKAKIIRD.

In terms of assembly, homotrimer; further assembles as hexamers of trimers. Interacts with gp41 (via C-terminus). Interacts with host CALM1; this interaction induces a conformational change in the Matrix protein, triggering exposure of the myristate group. Interacts with host AP3D1; this interaction allows the polyprotein trafficking to multivesicular bodies during virus assembly. Part of the pre-integration complex (PIC) which is composed of viral genome, matrix protein, Vpr and integrase. As to quaternary structure, homodimer; the homodimer further multimerizes as homohexamers or homopentamers. Interacts with human PPIA/CYPA; This interaction stabilizes the capsid. Interacts with human NUP153. Interacts with host PDZD8; this interaction stabilizes the capsid. Interacts with monkey TRIM5; this interaction destabilizes the capsid. Homodimer, whose active site consists of two apposed aspartic acid residues. In terms of assembly, heterodimer of p66 RT and p51 RT (RT p66/p51). Heterodimerization of RT is essential for DNA polymerase activity. The overall folding of the subdomains is similar in p66 RT and p51 RT but the spatial arrangements of the subdomains are dramatically different. As to quaternary structure, homotetramer; may further associate as a homohexadecamer. Part of the pre-integration complex (PIC) which is composed of viral genome, matrix protein, Vpr and integrase. Interacts with human SMARCB1/INI1 and human PSIP1/LEDGF isoform 1. Interacts with human KPNA3; this interaction might play a role in nuclear import of the pre-integration complex. Interacts with human NUP153; this interaction might play a role in nuclear import of the pre-integration complex. It depends on Mg(2+) as a cofactor. Specific enzymatic cleavages by the viral protease yield mature proteins. The protease is released by autocatalytic cleavage. The polyprotein is cleaved during and after budding, this process is termed maturation. Proteolytic cleavage of p66 RT removes the RNase H domain to yield the p51 RT subunit. Nucleocapsid protein p7 might be further cleaved after virus entry. Post-translationally, tyrosine phosphorylated presumably in the virion by a host kinase. Phosphorylation is apparently not a major regulator of membrane association. In terms of processing, phosphorylated possibly by host MAPK1; this phosphorylation is necessary for Pin1-mediated virion uncoating. Methylated by host PRMT6, impairing its function by reducing RNA annealing and the initiation of reverse transcription.

The protein resides in the host cell membrane. Its subcellular location is the host endosome. It is found in the host multivesicular body. It localises to the virion membrane. The protein localises to the host nucleus. The protein resides in the host cytoplasm. Its subcellular location is the virion. It carries out the reaction Specific for a P1 residue that is hydrophobic, and P1' variable, but often Pro.. The catalysed reaction is Endohydrolysis of RNA in RNA/DNA hybrids. Three different cleavage modes: 1. sequence-specific internal cleavage of RNA. Human immunodeficiency virus type 1 and Moloney murine leukemia virus enzymes prefer to cleave the RNA strand one nucleotide away from the RNA-DNA junction. 2. RNA 5'-end directed cleavage 13-19 nucleotides from the RNA end. 3. DNA 3'-end directed cleavage 15-20 nucleotides away from the primer terminus.. It catalyses the reaction 3'-end directed exonucleolytic cleavage of viral RNA-DNA hybrid.. The enzyme catalyses DNA(n) + a 2'-deoxyribonucleoside 5'-triphosphate = DNA(n+1) + diphosphate. Protease: The viral protease is inhibited by many synthetic protease inhibitors (PIs), such as amprenavir, atazanavir, indinavir, loprinavir, nelfinavir, ritonavir and saquinavir. Use of protease inhibitors in tritherapy regimens permit more ambitious therapeutic strategies. Reverse transcriptase/ribonuclease H: RT can be inhibited either by nucleoside RT inhibitors (NRTIs) or by non nucleoside RT inhibitors (NNRTIs). NRTIs act as chain terminators, whereas NNRTIs inhibit DNA polymerization by binding a small hydrophobic pocket near the RT active site and inducing an allosteric change in this region. Classical NRTIs are abacavir, adefovir (PMEA), didanosine (ddI), lamivudine (3TC), stavudine (d4T), tenofovir (PMPA), zalcitabine (ddC), and zidovudine (AZT). Classical NNRTIs are atevirdine (BHAP U-87201E), delavirdine, efavirenz (DMP-266), emivirine (I-EBU), and nevirapine (BI-RG-587). The tritherapies used as a basic effective treatment of AIDS associate two NRTIs and one NNRTI. Mediates, with Gag polyprotein, the essential events in virion assembly, including binding the plasma membrane, making the protein-protein interactions necessary to create spherical particles, recruiting the viral Env proteins, and packaging the genomic RNA via direct interactions with the RNA packaging sequence (Psi). Gag-Pol polyprotein may regulate its own translation, by the binding genomic RNA in the 5'-UTR. At low concentration, the polyprotein would promote translation, whereas at high concentration, the polyprotein would encapsidate genomic RNA and then shut off translation. Its function is as follows. Targets the polyprotein to the plasma membrane via a multipartite membrane-binding signal, that includes its myristoylated N-terminus. Matrix protein is part of the pre-integration complex. Implicated in the release from host cell mediated by Vpu. Binds to RNA. In terms of biological role, forms the conical core that encapsulates the genomic RNA-nucleocapsid complex in the virion. Most core are conical, with only 7% tubular. The core is constituted by capsid protein hexamer subunits. The core is disassembled soon after virion entry. Host restriction factors such as TRIM5-alpha or TRIMCyp bind retroviral capsids and cause premature capsid disassembly, leading to blocks in reverse transcription. Capsid restriction by TRIM5 is one of the factors which restricts HIV-1 to the human species. Host PIN1 apparently facilitates the virion uncoating. On the other hand, interactions with PDZD8 or CYPA stabilize the capsid. Functionally, encapsulates and protects viral dimeric unspliced genomic RNA (gRNA). Binds these RNAs through its zinc fingers. Acts as a nucleic acid chaperone which is involved in rearangement of nucleic acid secondary structure during gRNA retrotranscription. Also facilitates template switch leading to recombination. As part of the polyprotein, participates in gRNA dimerization, packaging, tRNA incorporation and virion assembly. Aspartyl protease that mediates proteolytic cleavages of Gag and Gag-Pol polyproteins during or shortly after the release of the virion from the plasma membrane. Cleavages take place as an ordered, step-wise cascade to yield mature proteins. This process is called maturation. Displays maximal activity during the budding process just prior to particle release from the cell. Also cleaves Nef and Vif, probably concomitantly with viral structural proteins on maturation of virus particles. Hydrolyzes host EIF4GI and PABP1 in order to shut off the capped cellular mRNA translation. The resulting inhibition of cellular protein synthesis serves to ensure maximal viral gene expression and to evade host immune response. Also mediates cleavage of host YTHDF3. Mediates cleavage of host CARD8, thereby activating the CARD8 inflammasome, leading to the clearance of latent HIV-1 in patient CD4(+) T-cells after viral reactivation; in contrast, HIV-1 can evade CARD8-sensing when its protease remains inactive in infected cells prior to viral budding. Its function is as follows. Multifunctional enzyme that converts the viral RNA genome into dsDNA in the cytoplasm, shortly after virus entry into the cell. This enzyme displays a DNA polymerase activity that can copy either DNA or RNA templates, and a ribonuclease H (RNase H) activity that cleaves the RNA strand of RNA-DNA heteroduplexes in a partially processive 3' to 5' endonucleasic mode. Conversion of viral genomic RNA into dsDNA requires many steps. A tRNA(3)-Lys binds to the primer-binding site (PBS) situated at the 5'-end of the viral RNA. RT uses the 3' end of the tRNA primer to perform a short round of RNA-dependent minus-strand DNA synthesis. The reading proceeds through the U5 region and ends after the repeated (R) region which is present at both ends of viral RNA. The portion of the RNA-DNA heteroduplex is digested by the RNase H, resulting in a ssDNA product attached to the tRNA primer. This ssDNA/tRNA hybridizes with the identical R region situated at the 3' end of viral RNA. This template exchange, known as minus-strand DNA strong stop transfer, can be either intra- or intermolecular. RT uses the 3' end of this newly synthesized short ssDNA to perform the RNA-dependent minus-strand DNA synthesis of the whole template. RNase H digests the RNA template except for two polypurine tracts (PPTs) situated at the 5'-end and near the center of the genome. It is not clear if both polymerase and RNase H activities are simultaneous. RNase H probably can proceed both in a polymerase-dependent (RNA cut into small fragments by the same RT performing DNA synthesis) and a polymerase-independent mode (cleavage of remaining RNA fragments by free RTs). Secondly, RT performs DNA-directed plus-strand DNA synthesis using the PPTs that have not been removed by RNase H as primers. PPTs and tRNA primers are then removed by RNase H. The 3' and 5' ssDNA PBS regions hybridize to form a circular dsDNA intermediate. Strand displacement synthesis by RT to the PBS and PPT ends produces a blunt ended, linear dsDNA copy of the viral genome that includes long terminal repeats (LTRs) at both ends. In terms of biological role, catalyzes viral DNA integration into the host chromosome, by performing a series of DNA cutting and joining reactions. This enzyme activity takes place after virion entry into a cell and reverse transcription of the RNA genome in dsDNA. The first step in the integration process is 3' processing. This step requires a complex comprising the viral genome, matrix protein, Vpr and integrase. This complex is called the pre-integration complex (PIC). The integrase protein removes 2 nucleotides from each 3' end of the viral DNA, leaving recessed CA OH's at the 3' ends. In the second step, the PIC enters cell nucleus. This process is mediated through integrase and Vpr proteins, and allows the virus to infect a non dividing cell. This ability to enter the nucleus is specific of lentiviruses, other retroviruses cannot and rely on cell division to access cell chromosomes. In the third step, termed strand transfer, the integrase protein joins the previously processed 3' ends to the 5' ends of strands of target cellular DNA at the site of integration. The 5'-ends are produced by integrase-catalyzed staggered cuts, 5 bp apart. A Y-shaped, gapped, recombination intermediate results, with the 5'-ends of the viral DNA strands and the 3' ends of target DNA strands remaining unjoined, flanking a gap of 5 bp. The last step is viral DNA integration into host chromosome. This involves host DNA repair synthesis in which the 5 bp gaps between the unjoined strands are filled in and then ligated. Since this process occurs at both cuts flanking the HIV genome, a 5 bp duplication of host DNA is produced at the ends of HIV-1 integration. Alternatively, Integrase may catalyze the excision of viral DNA just after strand transfer, this is termed disintegration. The polypeptide is Gag-Pol polyprotein (gag-pol) (Homo sapiens (Human)).